We begin with the raw amino-acid sequence, 320 residues long: GDP-L-fucose synthase (320 aa).

Residue 14 to 20 (GGSGLVG) coordinates NADP(+). The active-site Proton donor/acceptor is the Y142. Residues K146, 169–172 (PTNI), and H185 each bind NADP(+). 3 residues coordinate substrate: K193, R214, and D276.

This sequence belongs to the NAD(P)-dependent epimerase/dehydratase family. Fucose synthase subfamily.

The catalysed reaction is GDP-beta-L-fucose + NADP(+) = GDP-4-dehydro-alpha-D-rhamnose + NADPH + H(+). The protein operates within nucleotide-sugar biosynthesis; GDP-L-fucose biosynthesis via de novo pathway; GDP-L-fucose from GDP-alpha-D-mannose: step 2/2. In terms of biological role, catalyzes the two-step NADP-dependent conversion of GDP-4-dehydro-6-deoxy-D-mannose to GDP-fucose, involving an epimerase and a reductase reaction. This is GDP-L-fucose synthase (ger) from Dictyostelium discoideum (Social amoeba).